Consider the following 579-residue polypeptide: MGTAKLPALLWLLAGVVLALAVNPAHGAKTRHYDFFITETNYTRLCHEKSILTVNGQFPGPTIYARKGDLVIVNVHNNGNKNITIHWHGVDQPRNPWSDGPEFITQCPIRPGGNFTYQVILSEEEGTLWWHAHSDFDRATVHGAIVIHPKRGTTFPFKKPDKEIPVILGEWWNDDIEHVLDKAQLLGGDVDPSNANTINAQPGDMFPCSRDDTFKVAVQQGNTYLLRIINAGLTNDMFFAIAGHRLTVVGIDARYTKPLTVDYIMIAPGQTMDVLLEAKRTLGSNSRYYMAARTFITLPLDTIPFNNSTATAIVEYTDSVTARPVGPPEFPVQLPAIKDENAAMAFVTQLRSLGNQEHPVHVPTHVDEHMLIDIDINVLPCDPTNMAEKCKEGPQGNRFAASLNNVSFQSPAIDVLDAYYYSSGHGVYEEDFPNKPTAFVDPPVNNGSGPLMTKRGTKVKVLEYGTVVEVVFHDLSSENHPMHLHGFAFYVVGRGNGTFDESRDPATYNLVDPPFQNTVSVPRSGWAAIRFRADNPGVWFMHCHFDRHVVWGMDTVFIVKDGKTPQAQMLPRPPNMPQC.

The signal sequence occupies residues 1 to 27; it reads MGTAKLPALLWLLAGVVLALAVNPAHG. 2 Plastocyanin-like domains span residues 36-152 and 162-319; these read FITE…PKRG and KEIP…YTDS. N-linked (GlcNAc...) asparagine glycans are attached at residues asparagine 41 and asparagine 82. 2 residues coordinate Cu cation: histidine 86 and histidine 88. Asparagine 114 carries N-linked (GlcNAc...) asparagine glycosylation. Positions 131 and 133 each coordinate Cu cation. Residues asparagine 307, asparagine 405, and asparagine 446 are each glycosylated (N-linked (GlcNAc...) asparagine). The region spanning 436–563 is the Plastocyanin-like 3 domain; sequence PTAFVDPPVN…DTVFIVKDGK (128 aa). Positions 480, 483, and 485 each coordinate Cu cation. Residue asparagine 496 is glycosylated (N-linked (GlcNAc...) asparagine). The Cu cation site is built by histidine 542, cysteine 543, histidine 544, histidine 548, and methionine 553.

This sequence belongs to the multicopper oxidase family. Cu cation is required as a cofactor.

It is found in the secreted. It localises to the extracellular space. The protein localises to the apoplast. It catalyses the reaction 4 hydroquinone + O2 = 4 benzosemiquinone + 2 H2O. In terms of biological role, lignin degradation and detoxification of lignin-derived products. The sequence is that of Putative laccase-9 (LAC9) from Oryza sativa subsp. japonica (Rice).